Reading from the N-terminus, the 607-residue chain is 2-isopropylmalate synthase (607 aa).

The span at 1–10 (MASFSESLSQ) shows a compositional bias: polar residues. Residues 1 to 40 (MASFSESLSQDPADAYKSAPSITKPMGPPSPGQPQWNPQR) are disordered. The region spanning 75-349 (PLWCAVDLRD…DPQIDFSNID (275 aa)) is the Pyruvate carboxyltransferase domain. Mg(2+) is bound by residues Asp-84, His-288, His-290, and Asn-324. The interval 491–607 (PVQPLERIKQ…VSAVNRAMPR (117 aa)) is regulatory domain.

The protein belongs to the alpha-IPM synthase/homocitrate synthase family. LeuA type 2 subfamily. Homodimer. Requires Mg(2+) as cofactor.

It localises to the cytoplasm. It carries out the reaction 3-methyl-2-oxobutanoate + acetyl-CoA + H2O = (2S)-2-isopropylmalate + CoA + H(+). It functions in the pathway amino-acid biosynthesis; L-leucine biosynthesis; L-leucine from 3-methyl-2-oxobutanoate: step 1/4. Functionally, catalyzes the condensation of the acetyl group of acetyl-CoA with 3-methyl-2-oxobutanoate (2-ketoisovalerate) to form 3-carboxy-3-hydroxy-4-methylpentanoate (2-isopropylmalate). In Mycobacterium leprae (strain TN), this protein is 2-isopropylmalate synthase.